The following is a 209-amino-acid chain: Uracil phosphoribosyltransferase (209 aa).

5-phospho-alpha-D-ribose 1-diphosphate contacts are provided by residues arginine 79, arginine 104, and 131–139 (DPMLATGGS). Uracil contacts are provided by residues isoleucine 194 and 199–201 (GDA). A 5-phospho-alpha-D-ribose 1-diphosphate-binding site is contributed by aspartate 200.

It belongs to the UPRTase family. Requires Mg(2+) as cofactor.

The catalysed reaction is UMP + diphosphate = 5-phospho-alpha-D-ribose 1-diphosphate + uracil. It functions in the pathway pyrimidine metabolism; UMP biosynthesis via salvage pathway; UMP from uracil: step 1/1. Allosterically activated by GTP. In terms of biological role, catalyzes the conversion of uracil and 5-phospho-alpha-D-ribose 1-diphosphate (PRPP) to UMP and diphosphate. In Clostridium perfringens (strain ATCC 13124 / DSM 756 / JCM 1290 / NCIMB 6125 / NCTC 8237 / Type A), this protein is Uracil phosphoribosyltransferase.